Here is an 80-residue protein sequence, read N- to C-terminus: Serine palmitoyltransferase small subunit B (80 aa).

Topologically, residues Met1 to Ser11 are cytoplasmic. The helical transmembrane segment at Trp12 to Trp29 threads the bilayer. At Glu30–Thr36 the chain is on the lumenal side. Residues Leu37–Val57 traverse the membrane as a helical segment. Residues Arg58–Ser80 are Cytoplasmic-facing.

The protein belongs to the SPTSS family. SPTSSB subfamily. Component of the serine palmitoyltransferase (SPT) complex, which is composed of SPTLC1, SPTLC2 or SPTLC3 and SPTSSA or SPTSSB. The heterodimer consisting of SPTLC1 and SPTLC2/SPTLC3 forms the catalytic core of the enzyme, while SPTSSA or SPTSSB subunits determine substrate specificity. SPT also interacts with ORMDL proteins, especially ORMDL3, which negatively regulate SPT activity in the presence of ceramides.

It is found in the endoplasmic reticulum membrane. It participates in lipid metabolism; sphingolipid metabolism. Functionally, component of the serine palmitoyltransferase multisubunit enzyme (SPT) that catalyzes the initial and rate-limiting step in sphingolipid biosynthesis by condensing L-serine and activated acyl-CoA (most commonly palmitoyl-CoA) to form long-chain bases. The SPT complex is composed of SPTLC1, SPTLC2 or SPTLC3 and SPTSSA or SPTSSB. Within this complex, the heterodimer consisting of SPTLC1 and SPTLC2/SPTLC3 forms the catalytic core. Within the SPT complex, SPTSSB stimulates the catalytic activity and plays a role in substrate specificity. SPT complexes with this subunit showing a preference for longer acyl-CoAs. The SPTLC1-SPTLC2-SPTSSB complex shows a strong preference for C18-CoA substrate, while the SPTLC1-SPTLC3-SPTSSB isozyme displays an ability to use a broader range of acyl-CoAs, without apparent preference. The chain is Serine palmitoyltransferase small subunit B (sptssb) from Xenopus tropicalis (Western clawed frog).